A 125-amino-acid polypeptide reads, in one-letter code: Small ribosomal subunit protein uS12m (125 aa).

Disordered regions lie at residues Met-1–Arg-50 and Gly-106–Ile-125. Residues His-10–Ala-23 are compositionally biased toward basic and acidic residues.

It belongs to the universal ribosomal protein uS12 family.

The protein localises to the mitochondrion. Its function is as follows. Protein S12 is involved in the translation initiation step. This Magnolia soulangeana (Saucer magnolia) protein is Small ribosomal subunit protein uS12m (RPS12).